The sequence spans 261 residues: Probable trans-aconitate 2-methyltransferase (261 aa).

This sequence belongs to the methyltransferase superfamily. Tam family.

The protein localises to the cytoplasm. The enzyme catalyses trans-aconitate + S-adenosyl-L-methionine = (E)-3-(methoxycarbonyl)pent-2-enedioate + S-adenosyl-L-homocysteine. In terms of biological role, catalyzes the S-adenosylmethionine monomethyl esterification of trans-aconitate. The polypeptide is Probable trans-aconitate 2-methyltransferase (Mycobacterium bovis (strain ATCC BAA-935 / AF2122/97)).